We begin with the raw amino-acid sequence, 592 residues long: Potassium-transporting ATPase potassium-binding subunit (592 aa).

13 helical membrane-spanning segments follow: residues 6-26 (WLET…FGTY), 67-87 (ACAM…MLLL), 136-156 (GFAV…IAAI), 179-199 (LYIL…QGVI), 283-303 (LSNI…TYTF), 312-332 (QGWA…GVFY), 359-379 (FGLA…CGAV), 389-409 (IGGM…GGVG), 411-431 (GLYT…LMIG), 450-470 (ITTV…AMIL), 489-511 (LYAF…GNTL), 519-539 (VAML…AGGL), and 559-579 (FALW…FPAL).

The protein belongs to the KdpA family. The system is composed of three essential subunits: KdpA, KdpB and KdpC.

It localises to the cell inner membrane. Part of the high-affinity ATP-driven potassium transport (or Kdp) system, which catalyzes the hydrolysis of ATP coupled with the electrogenic transport of potassium into the cytoplasm. This subunit binds the periplasmic potassium ions and delivers the ions to the membrane domain of KdpB through an intramembrane tunnel. The protein is Potassium-transporting ATPase potassium-binding subunit of Geotalea uraniireducens (strain Rf4) (Geobacter uraniireducens).